The primary structure comprises 382 residues: Small ribosomal subunit protein mS35 (382 aa).

Residues 363–375 (GRGGKALPGGKGG) are compositionally biased toward gly residues. The tract at residues 363–382 (GRGGKALPGGKGGKMQRSKR) is disordered.

It belongs to the mitochondrion-specific ribosomal protein mS35 family. Component of the mitochondrial small ribosomal subunit (mt-SSU). Mature N.crassa 74S mitochondrial ribosomes consist of a small (37S) and a large (54S) subunit. The 37S small subunit contains a 16S ribosomal RNA (16S mt-rRNA) and 32 different proteins. The 54S large subunit contains a 23S rRNA (23S mt-rRNA) and 42 different proteins.

The protein resides in the mitochondrion. In terms of biological role, component of the mitochondrial ribosome (mitoribosome), a dedicated translation machinery responsible for the synthesis of mitochondrial genome-encoded proteins, including at least some of the essential transmembrane subunits of the mitochondrial respiratory chain. The mitoribosomes are attached to the mitochondrial inner membrane and translation products are cotranslationally integrated into the membrane. The protein is Small ribosomal subunit protein mS35 (rsm24) of Neurospora crassa (strain ATCC 24698 / 74-OR23-1A / CBS 708.71 / DSM 1257 / FGSC 987).